Consider the following 759-residue polypeptide: MTQDKCPFKEQPSQPNFAGGGTSNKDWWPDRLKLNILRQHTAVSNPLDADFDYAAAFKSLDYEALKKDLRALMTDSQDWWPADFGHYGGLFIRMAWHSAGTYRVFDGRGGAGQGQQRFAPLNSWPDNVSLDKARRLLWPIKQKYGNKISWADLMILTGNVALESMGFKTFGFAGGRPDTWEADEATYWGRETTWLGNDARYAKGFSGSDKRGTLIADEDSHKTTHSRELETPLAAAHMGLIYVNPEGPDGNPDPIAAAHDIRDTFGRMAMNDEETVALIAGGHTFGKTHGAAPADNVGKEPEAAGLEAQGLGWANKHGSGKGPDTITSGLEVTWTKTPTQWSNNFLEYLFKFEWELTKSPAGAHQWVAKNADEIIPHAYDASKKRKPTMLTTDLSLRFDPAYEKIARRFLEHPDQFADAFARAWFKLTHRDMGPRARYLGPEVPSEVLIWQDPIPAVNHPLVDASDIATLKDEILASGVPFRSFISTAWAAASTFRGSDKRGGANGARIRLAPQRDWEANNQPWLREALSALEAVQSRFNSRGDGKKVSLADLIVLAGCAAVEKAAQDAGHPIKVPFVPGRMDASQEETDVQSFSHMEPFADGFRNFAKGPARPRAEHYLVDKAQLLNLSAPEMTVLVGGLRVLNTNYDGSAHGVFTSRPGALSNDFFVHLLDMNTAWKDAGNGELFEGSDRKTGGKKWTATRADLVFGSNAELRAIAEVYASNDGDMKFVKDFVAAWNKVMNLDRFDLKGKQTIPARL.

The segment at 1 to 24 (MTQDKCPFKEQPSQPNFAGGGTSN) is disordered. Positions 96-242 (WHSAGTYRVF…LAAAHMGLIY (147 aa)) form a cross-link, tryptophyl-tyrosyl-methioninium (Trp-Tyr) (with M-268). The active-site Proton acceptor is His97. A cross-link (tryptophyl-tyrosyl-methioninium (Tyr-Met) (with W-96)) is located at residues 242 to 268 (YVNPEGPDGNPDPIAAAHDIRDTFGRM). Heme b is bound at residue His283.

The protein belongs to the peroxidase family. Peroxidase/catalase subfamily. In terms of assembly, homodimer or homotetramer. Heme b is required as a cofactor. Formation of the three residue Trp-Tyr-Met cross-link is important for the catalase, but not the peroxidase activity of the enzyme.

Its subcellular location is the cytoplasm. It catalyses the reaction H2O2 + AH2 = A + 2 H2O. The catalysed reaction is 2 H2O2 = O2 + 2 H2O. Bifunctional enzyme with both catalase and broad-spectrum peroxidase activity. This chain is Catalase-peroxidase, found in Neosartorya fischeri (strain ATCC 1020 / DSM 3700 / CBS 544.65 / FGSC A1164 / JCM 1740 / NRRL 181 / WB 181) (Aspergillus fischerianus).